We begin with the raw amino-acid sequence, 116 residues long: Large ribosomal subunit protein uL18 (116 aa).

Belongs to the universal ribosomal protein uL18 family. As to quaternary structure, part of the 50S ribosomal subunit; part of the 5S rRNA/L5/L18/L25 subcomplex. Contacts the 5S and 23S rRNAs.

In terms of biological role, this is one of the proteins that bind and probably mediate the attachment of the 5S RNA into the large ribosomal subunit, where it forms part of the central protuberance. This Pseudomonas fluorescens (strain ATCC BAA-477 / NRRL B-23932 / Pf-5) protein is Large ribosomal subunit protein uL18.